Reading from the N-terminus, the 751-residue chain is Serine/threonine-protein kinase-like protein CCR4 (751 aa).

A signal peptide spans 1-31 (MALTISISCFSSYFVSLLLLVLSSFSFVCFS). Topologically, residues 32–366 (LSTVSISHIS…NKTWSRRNIA (335 aa)) are extracellular. N-linked (GlcNAc...) asparagine glycosylation is found at N42, N51, N98, N243, N254, N283, and N357. The helical transmembrane segment at 367 to 387 (FLVVGCVGTFSLLLVISFLIF) threads the bilayer. Over 388-751 (KSHCRCRVHD…TETVSRSNTY (364 aa)) the chain is Cytoplasmic. In terms of domain architecture, Protein kinase spans 443–733 (FSVRFHLGIG…EVVSKLESAL (291 aa)). ATP is bound by residues 449-457 (LGIGSFGSV) and K471. D579 acts as the Proton acceptor in catalysis.

It belongs to the protein kinase superfamily. Ser/Thr protein kinase family. As to quaternary structure, homodimer. As to expression, expressed in roots, leaves, especially in trichomes, shoot apical meristems (SAM), and, to a lower extent, in floral buds.

It localises to the membrane. The catalysed reaction is L-seryl-[protein] + ATP = O-phospho-L-seryl-[protein] + ADP + H(+). The enzyme catalyses L-threonyl-[protein] + ATP = O-phospho-L-threonyl-[protein] + ADP + H(+). This Arabidopsis thaliana (Mouse-ear cress) protein is Serine/threonine-protein kinase-like protein CCR4 (CCR4).